Here is a 214-residue protein sequence, read N- to C-terminus: Chaperone protein TorD (214 aa).

Belongs to the TorD/DmsD family. TorD subfamily.

It is found in the cytoplasm. Its function is as follows. Involved in the biogenesis of TorA. Acts on TorA before the insertion of the molybdenum cofactor and, as a result, probably favors a conformation of the apoenzyme that is competent for acquiring the cofactor. The sequence is that of Chaperone protein TorD from Aeromonas salmonicida (strain A449).